Consider the following 400-residue polypeptide: Cytohesin-3 (400 aa).

Residues Glu14–Ser61 are a coiled coil. In terms of domain architecture, SEC7 spans Phe77–Asn206. One can recognise a PH domain in the interval Asn264 to Ser381. A 1,2-diacyl-sn-glycero-3-phospho-(1D-myo-inositol-3,4,5-trisphosphate) is bound by residues Lys273–Thr281, Arg285, Tyr296, Arg306, and Asn355. A C-terminal autoinhibitory region region spans residues Arg392 to Lys400.

As to quaternary structure, interacts with TAMALIN. Interacts with ARF6. Interacts with FRMD4A. Interacts with FRMD4B. As to expression, almost absent from liver, thymus and peripheral blood lymphocytes.

It localises to the cytoplasm. The protein localises to the cytosol. Its subcellular location is the cell membrane. The protein resides in the cell junction. It is found in the adherens junction. It localises to the tight junction. Functionally, promotes guanine-nucleotide exchange on ARF1 and ARF6. Promotes the activation of ARF factors through replacement of GDP with GTP. Plays a role in the epithelial polarization. The protein is Cytohesin-3 of Homo sapiens (Human).